The sequence spans 37 residues: Large ribosomal subunit protein bL36 (37 aa).

It belongs to the bacterial ribosomal protein bL36 family.

The polypeptide is Large ribosomal subunit protein bL36 (Chromohalobacter salexigens (strain ATCC BAA-138 / DSM 3043 / CIP 106854 / NCIMB 13768 / 1H11)).